A 220-amino-acid polypeptide reads, in one-letter code: Deoxyribose-phosphate aldolase (220 aa).

The active-site Proton donor/acceptor is Asp-89. Catalysis depends on Lys-151, which acts as the Schiff-base intermediate with acetaldehyde. The Proton donor/acceptor role is filled by Lys-180.

Belongs to the DeoC/FbaB aldolase family. DeoC type 1 subfamily.

Its subcellular location is the cytoplasm. It catalyses the reaction 2-deoxy-D-ribose 5-phosphate = D-glyceraldehyde 3-phosphate + acetaldehyde. It functions in the pathway carbohydrate degradation; 2-deoxy-D-ribose 1-phosphate degradation; D-glyceraldehyde 3-phosphate and acetaldehyde from 2-deoxy-alpha-D-ribose 1-phosphate: step 2/2. In terms of biological role, catalyzes a reversible aldol reaction between acetaldehyde and D-glyceraldehyde 3-phosphate to generate 2-deoxy-D-ribose 5-phosphate. The protein is Deoxyribose-phosphate aldolase of Lactococcus lactis subsp. lactis (strain IL1403) (Streptococcus lactis).